A 264-amino-acid chain; its full sequence is Phosphonates import ATP-binding protein PhnC (264 aa).

The ABC transporter domain maps to 8–255 (LQAENLRMTF…KLIEIYGPEF (248 aa)). 40-47 (GPSGSGKS) serves as a coordination point for ATP.

The protein belongs to the ABC transporter superfamily. Phosphonates importer (TC 3.A.1.9.1) family. In terms of assembly, the complex is composed of two ATP-binding proteins (PhnC), two transmembrane proteins (PhnE) and a solute-binding protein (PhnD).

It localises to the cell inner membrane. The catalysed reaction is phosphonate(out) + ATP + H2O = phosphonate(in) + ADP + phosphate + H(+). Functionally, part of the ABC transporter complex PhnCDE involved in phosphonates import. Responsible for energy coupling to the transport system. The protein is Phosphonates import ATP-binding protein PhnC of Maricaulis maris (strain MCS10) (Caulobacter maris).